The sequence spans 254 residues: Alcohol dehydrogenase 1 (254 aa).

Residue Phe-10 to Leu-33 participates in NAD(+) binding. Ser-138 serves as a coordination point for substrate. Catalysis depends on Tyr-151, which acts as the Proton acceptor.

This sequence belongs to the short-chain dehydrogenases/reductases (SDR) family. Homodimer.

It catalyses the reaction a primary alcohol + NAD(+) = an aldehyde + NADH + H(+). The catalysed reaction is a secondary alcohol + NAD(+) = a ketone + NADH + H(+). The protein is Alcohol dehydrogenase 1 (Adh1) of Drosophila montana (Fruit fly).